The following is a 957-amino-acid chain: Glycine dehydrogenase (decarboxylating) (957 aa).

N6-(pyridoxal phosphate)lysine is present on Lys-708.

Belongs to the GcvP family. As to quaternary structure, the glycine cleavage system is composed of four proteins: P, T, L and H. Pyridoxal 5'-phosphate is required as a cofactor.

It catalyses the reaction N(6)-[(R)-lipoyl]-L-lysyl-[glycine-cleavage complex H protein] + glycine + H(+) = N(6)-[(R)-S(8)-aminomethyldihydrolipoyl]-L-lysyl-[glycine-cleavage complex H protein] + CO2. In terms of biological role, the glycine cleavage system catalyzes the degradation of glycine. The P protein binds the alpha-amino group of glycine through its pyridoxal phosphate cofactor; CO(2) is released and the remaining methylamine moiety is then transferred to the lipoamide cofactor of the H protein. The protein is Glycine dehydrogenase (decarboxylating) of Escherichia coli (strain UTI89 / UPEC).